The following is a 402-amino-acid chain: MANEFKFTDVGEGLHEGKVTEILKKVGDTIKVDEALFVVETDKVTTELPSPYAGVITAITTNVGDVVHIGQVMAVIDDGAGAAAPAAPQPVSAPAPAPTPTFTPTPAPVTTEPVVEEAGASVVGEIKVSNSVFPIFGVQPSAPQPTPAPVVQPTSAPTPTPAPASAAAPSGEETIAITTMRKAIAEAMVKSHENIPATILTFYVNATKLKQYRESVNGLALSKYNMKISFFAFFVKAIVNALKKFPVFNGRYDKERNLIVLNKDVNVGIAVDTPDGLIVPNIKQAQTKSVVDIAKDIVDLANRARSKQIKLPDLSKGTISVTNFGSLGAAFGTPIIKHPEMCIVATGNMEERVVRAEGGVAVHTILPLTIAADHRWVDGADVGRFGKEIAKQIEELIDLEVA.

Residues 2–77 form the Lipoyl-binding domain; sequence ANEFKFTDVG…HIGQVMAVID (76 aa). An N6-lipoyllysine modification is found at Lys-43. Disordered stretches follow at residues 82–110 and 143–172; these read AAAPAAPQPVSAPAPAPTPTFTPTPAPVT and PQPTPAPVVQPTSAPTPTPAPASAAAPSGE. Composition is skewed to pro residues over residues 87 to 107 and 143 to 162; these read APQPVSAPAPAPTPTFTPTPA and PQPTPAPVVQPTSAPTPTPA. His-374 is a catalytic residue.

The protein belongs to the 2-oxoacid dehydrogenase family. Forms a 24-polypeptide structural core with octahedral symmetry. Requires (R)-lipoate as cofactor.

It carries out the reaction N(6)-[(R)-dihydrolipoyl]-L-lysyl-[protein] + acetyl-CoA = N(6)-[(R)-S(8)-acetyldihydrolipoyl]-L-lysyl-[protein] + CoA. Functionally, the pyruvate dehydrogenase complex catalyzes the overall conversion of pyruvate to acetyl-CoA and CO(2). It contains multiple copies of three enzymatic components: pyruvate dehydrogenase (E1), dihydrolipoamide acetyltransferase (E2) and lipoamide dehydrogenase (E3). The chain is Dihydrolipoyllysine-residue acetyltransferase component of pyruvate dehydrogenase complex (pdhC) from Mycoplasma pneumoniae (strain ATCC 29342 / M129 / Subtype 1) (Mycoplasmoides pneumoniae).